A 365-amino-acid polypeptide reads, in one-letter code: tRNA(Met) cytidine acetate ligase (365 aa).

ATP-binding positions include 7–20 (IAEF…HKYL), glycine 96, asparagine 152, and arginine 175.

Belongs to the TmcAL family.

It is found in the cytoplasm. It carries out the reaction cytidine(34) in elongator tRNA(Met) + acetate + ATP = N(4)-acetylcytidine(34) in elongator tRNA(Met) + AMP + diphosphate. Catalyzes the formation of N(4)-acetylcytidine (ac(4)C) at the wobble position of elongator tRNA(Met), using acetate and ATP as substrates. First activates an acetate ion to form acetyladenylate (Ac-AMP) and then transfers the acetyl group to tRNA to form ac(4)C34. This Streptococcus pneumoniae (strain ATCC 700669 / Spain 23F-1) protein is tRNA(Met) cytidine acetate ligase.